The chain runs to 120 residues: uncharacterized protein (120 aa).

The protein localises to the virion. This is an uncharacterized protein from Acanthamoeba polyphaga mimivirus (APMV).